The sequence spans 119 residues: Ribonuclease P protein component (119 aa).

Belongs to the RnpA family. Consists of a catalytic RNA component (M1 or rnpB) and a protein subunit.

It catalyses the reaction Endonucleolytic cleavage of RNA, removing 5'-extranucleotides from tRNA precursor.. In terms of biological role, RNaseP catalyzes the removal of the 5'-leader sequence from pre-tRNA to produce the mature 5'-terminus. It can also cleave other RNA substrates such as 4.5S RNA. The protein component plays an auxiliary but essential role in vivo by binding to the 5'-leader sequence and broadening the substrate specificity of the ribozyme. In Yersinia pseudotuberculosis serotype O:1b (strain IP 31758), this protein is Ribonuclease P protein component.